We begin with the raw amino-acid sequence, 222 residues long: uncharacterized protein (222 aa).

This is an uncharacterized protein from Klebsiella pneumoniae.